The sequence spans 427 residues: Galactose-3-O-sulfotransferase 3 (427 aa).

At 1–19 (MPPIFQRLQQATKMSRRKI) the chain is on the cytoplasmic side. Residues 20–40 (LLLVLGCSTLSLLIHQGAQLS) traverse the membrane as a helical; Signal-anchor for type II membrane protein segment. Over 41–427 (WYPKLFPLSC…RPIRALRPGH (387 aa)) the chain is Lumenal. N90, N109, N176, and N301 each carry an N-linked (GlcNAc...) asparagine glycan. The disordered stretch occupies residues 404-427 (MRLRPEPVLDNPPPRPIRALRPGH).

The protein belongs to the galactose-3-O-sulfotransferase family. It depends on Mg(2+) as a cofactor.

Its subcellular location is the golgi apparatus. It is found in the golgi stack membrane. Its pathway is protein modification; carbohydrate sulfation. Functionally, transfers a sulfate to position 3 of non-reducing beta-galactosyl residues in N-glycans and core2-branched O-glycans. Has high activity towards Gal-beta-1,4-GlcNAc, Gal-beta-1,4(Fuc-alpha-1,3)GlcNAc and lower activity towards Gal-beta-1,3(Fuc-alpha-1,4)GlcNAc. This Bos taurus (Bovine) protein is Galactose-3-O-sulfotransferase 3 (GAL3ST3).